A 699-amino-acid polypeptide reads, in one-letter code: Long-chain-fatty-acid--CoA ligase 1 (699 aa).

Position 1 is an N-acetylmethionine (Met1). Tyr9 is subject to 3'-nitrotyrosine. The helical; Signal-anchor for type III membrane protein transmembrane segment at 25–45 threads the bilayer; the sequence is LPTNTLMGFGAFAALTTFWYA. Over 46 to 699 the chain is Cytoplasmic; it reads TRPKALKPPC…IDELYATIKI (654 aa). Position 85 is a phosphotyrosine (Tyr85). At Tyr86 the chain carries 3'-nitrotyrosine. O-linked (GlcNAc) serine glycosylation occurs at Ser136. N6-acetyllysine is present on residues Lys208, Lys357, and Lys387. Residue Ser621 is modified to Phosphoserine. The residue at position 633 (Lys633) is an N6-acetyllysine.

The protein belongs to the ATP-dependent AMP-binding enzyme family. Mg(2+) serves as cofactor.

Its subcellular location is the mitochondrion outer membrane. The protein localises to the peroxisome membrane. The protein resides in the microsome membrane. It is found in the endoplasmic reticulum membrane. It carries out the reaction a long-chain fatty acid + ATP + CoA = a long-chain fatty acyl-CoA + AMP + diphosphate. It catalyses the reaction (5Z,8Z,11Z,14Z)-eicosatetraenoate + ATP + CoA = (5Z,8Z,11Z,14Z)-eicosatetraenoyl-CoA + AMP + diphosphate. The catalysed reaction is 3,7,11,15-tetramethylhexadecanoate + ATP + CoA = phytanoyl-CoA + AMP + diphosphate. The enzyme catalyses hexadecanoate + ATP + CoA = hexadecanoyl-CoA + AMP + diphosphate. It carries out the reaction (E)-hexadec-2-enoate + ATP + CoA = (2E)-hexadecenoyl-CoA + AMP + diphosphate. It catalyses the reaction 2,6,10,14-tetramethylpentadecanoate + ATP + CoA = pristanoyl-CoA + AMP + diphosphate. The catalysed reaction is 14,15-epoxy-(5Z,8Z,11Z)-eicosatrienoate + ATP + CoA = 14,15-epoxy-(5Z,8Z,11Z)-eicosatrienoyl-CoA + AMP + diphosphate. The enzyme catalyses 5-hydroxy-(6E,8Z,11Z,14Z)-eicosatetraenoate + ATP + CoA = 5-hydroxy-(6E,8Z,11Z,14Z)-eicosatetraenoyl-CoA + AMP + diphosphate. It carries out the reaction 12-hydroxy-(5Z,8Z,10E,14Z)-eicosatetraenoate + ATP + CoA = 12-hydroxy-(5Z,8Z,10E,14Z)-eicosatetraenoyl-CoA + AMP + diphosphate. It catalyses the reaction 15-hydroxy-(5Z,8Z,11Z,13E)-eicosatetraenoate + ATP + CoA = 15-hydroxy-(5Z,8Z,11Z,13E)-eicosatetraenoyl-CoA + AMP + diphosphate. The catalysed reaction is (9Z)-octadecenoate + ATP + CoA = (9Z)-octadecenoyl-CoA + AMP + diphosphate. Its activity is regulated as follows. Inhibited at high temperature and by arachidonate. Its function is as follows. Catalyzes the conversion of long-chain fatty acids to their active form acyl-CoAs for both synthesis of cellular lipids, and degradation via beta-oxidation. Preferentially uses palmitoleate, oleate and linoleate. Preferentially activates arachidonate than epoxyeicosatrienoic acids (EETs) or hydroxyeicosatrienoic acids (HETEs). The chain is Long-chain-fatty-acid--CoA ligase 1 from Mus musculus (Mouse).